We begin with the raw amino-acid sequence, 361 residues long: MDNVMAQLESLEVRYEEIQEMMADPEVIADTKRYMEITKEEADMREVVQKFRKFKADKEEIAGNKEIIADGSDPELVEMAKMENSELEDEISQLEDEIKILMLPKDPNDDKDIIMEIRGAAGGDEASLFAGDLLRMYEKYAENQGWNVSIVDSEQTEVGGYKRVAIMITGNKVYSKLKYENGAHRVQRIPVTESAGRVHTSTATVAVMPEYEQVDIDLDPKEIRVDVYRSSGAGGQHINKTSSAVRMTHLPTGIVVAMQDQRSQQQNRAKAMEILKSRVYDYYESQNRDKYDAKRKNAVGTGDRSERIRTYNYPQNRVTDHRIGLTLNKLDRIMNGELDEVIDALTVYYQTKQLEELAENA.

Gln236 carries the post-translational modification N5-methylglutamine.

Belongs to the prokaryotic/mitochondrial release factor family. Methylated by PrmC. Methylation increases the termination efficiency of RF1.

It localises to the cytoplasm. In terms of biological role, peptide chain release factor 1 directs the termination of translation in response to the peptide chain termination codons UAG and UAA. This chain is Peptide chain release factor 1, found in Lactobacillus delbrueckii subsp. bulgaricus (strain ATCC BAA-365 / Lb-18).